A 179-amino-acid polypeptide reads, in one-letter code: MVQAWYMDDSTEDQRKPHHLQPEQPVSLEQLKAVGVHSFSLDADRYESDPELAKIRQENNYTWMDIITIHKDTLPNYEEKLKIFYEEHLHLDDEIRYILEGSGYFDVRDKEDRWIRIFMQKGDMITLPAGIYHRFTLDENNYVKAMRLFVGDPVWTPYNRPADNFEAREKYVQFLTQTV.

The tract at residues 1–21 (MVQAWYMDDSTEDQRKPHHLQ) is disordered. 4 residues coordinate Fe(2+): histidine 88, histidine 90, glutamate 94, and histidine 133. Ni(2+) is bound by residues histidine 88, histidine 90, glutamate 94, and histidine 133.

Belongs to the acireductone dioxygenase (ARD) family. In terms of assembly, monomer. Interacts with MMP14. Fe(2+) is required as a cofactor. Ni(2+) serves as cofactor.

The protein resides in the cytoplasm. The protein localises to the nucleus. It localises to the cell membrane. The catalysed reaction is 1,2-dihydroxy-5-(methylsulfanyl)pent-1-en-3-one + O2 = 4-methylsulfanyl-2-oxobutanoate + formate + 2 H(+). It carries out the reaction 1,2-dihydroxy-5-(methylsulfanyl)pent-1-en-3-one + O2 = 3-(methylsulfanyl)propanoate + CO + formate + 2 H(+). Its pathway is amino-acid biosynthesis; L-methionine biosynthesis via salvage pathway; L-methionine from S-methyl-5-thio-alpha-D-ribose 1-phosphate: step 5/6. Its function is as follows. Catalyzes 2 different reactions between oxygen and the acireductone 1,2-dihydroxy-3-keto-5-methylthiopentene (DHK-MTPene) depending upon the metal bound in the active site. Fe-containing acireductone dioxygenase (Fe-ARD) produces formate and 2-keto-4-methylthiobutyrate (KMTB), the alpha-ketoacid precursor of methionine in the methionine recycle pathway. Ni-containing acireductone dioxygenase (Ni-ARD) produces methylthiopropionate, carbon monoxide and formate, and does not lie on the methionine recycle pathway. The protein is Acireductone dioxygenase (adi1) of Xenopus tropicalis (Western clawed frog).